A 130-amino-acid chain; its full sequence is Cytochrome c-type biogenesis protein CcmE (130 aa).

At 1-7 (MKKKHKR) the chain is on the cytoplasmic side. Residues 8–28 (LLITSGIFCFLSCAVFFILTT) traverse the membrane as a helical; Signal-anchor for type II membrane protein segment. Residues 29–130 (LKENISFFYT…DENYMPKVLK (102 aa)) lie on the Extracellular side of the membrane. Heme is bound by residues histidine 120 and tyrosine 124.

It belongs to the CcmE/CycJ family.

The protein resides in the cell membrane. Heme chaperone required for the biogenesis of c-type cytochromes. Transiently binds heme delivered by CcmC and transfers the heme to apo-cytochromes in a process facilitated by CcmF and CcmH. The chain is Cytochrome c-type biogenesis protein CcmE from Wolbachia pipientis wMel.